Reading from the N-terminus, the 215-residue chain is Fibroblast growth factor 17 (215 aa).

The first 22 residues, 1–22, serve as a signal peptide directing secretion; the sequence is MYGINQRYLYISFHFFVVWCHA. Asparagine 137 is a glycosylation site (N-linked (GlcNAc...) asparagine).

This sequence belongs to the heparin-binding growth factors family.

The protein localises to the secreted. Involved in dorsal-ventral embryonic patterning, by promoting expression of bone morphogenetic protein (BMP) antagonists such as chd. Also involved in anterior-posterior neural patterning and in mesoderm induction. The polypeptide is Fibroblast growth factor 17 (fgf17) (Danio rerio (Zebrafish)).